Reading from the N-terminus, the 135-residue chain is Ribosome-binding factor A (135 aa).

The protein belongs to the RbfA family. In terms of assembly, monomer. Binds 30S ribosomal subunits, but not 50S ribosomal subunits or 70S ribosomes.

It localises to the cytoplasm. Its function is as follows. One of several proteins that assist in the late maturation steps of the functional core of the 30S ribosomal subunit. Associates with free 30S ribosomal subunits (but not with 30S subunits that are part of 70S ribosomes or polysomes). Required for efficient processing of 16S rRNA. May interact with the 5'-terminal helix region of 16S rRNA. The chain is Ribosome-binding factor A from Hahella chejuensis (strain KCTC 2396).